Reading from the N-terminus, the 264-residue chain is Wtf element wtf11 (264 aa).

Positions 1-12 are enriched in polar residues; sequence MNSNYVPLTSSV. Positions 1-26 are disordered; sequence MNSNYVPLTSSVDVEEKMESENGVDL. 4 helical membrane passes run 107 to 127, 145 to 165, 180 to 200, and 217 to 237; these read LLFVFVISISIVCIFDLVIFG, LSWFCASLALLFILMRYYDFW, WKNTPLAFLQVLIFNIIGFFV, and SLFAHVSFATMSIFIFIFETL.

The protein belongs to the WTF family.

The protein localises to the membrane. May act in meiotic drive. The polypeptide is Wtf element wtf11 (Schizosaccharomyces pombe (strain 972 / ATCC 24843) (Fission yeast)).